Here is a 253-residue protein sequence, read N- to C-terminus: Precorrin-4 C(11)-methyltransferase (253 aa).

The protein belongs to the precorrin methyltransferase family.

It catalyses the reaction precorrin-4 + S-adenosyl-L-methionine = precorrin-5 + S-adenosyl-L-homocysteine. It functions in the pathway cofactor biosynthesis; adenosylcobalamin biosynthesis; cob(II)yrinate a,c-diamide from precorrin-2 (aerobic route): step 4/10. In terms of biological role, catalyzes the methylation of C-11 in precorrin-4 to form precorrin-5. This Sinorhizobium sp protein is Precorrin-4 C(11)-methyltransferase (cobM).